Reading from the N-terminus, the 206-residue chain is BAG family molecular chaperone regulator 1B (206 aa).

Residues 122–202 (IEAYIDELQQ…QYLSKLDSTK (81 aa)) enclose the BAG domain. Ser144 bears the Phosphoserine mark.

Binds to the ATPase domain of HSP70/HSC chaperones.

Functionally, inhibits the chaperone activity of HSP70/HSC70 by promoting substrate release. The protein is BAG family molecular chaperone regulator 1B (bag102) of Schizosaccharomyces pombe (strain 972 / ATCC 24843) (Fission yeast).